We begin with the raw amino-acid sequence, 330 residues long: Ferredoxin--NADP reductase (330 aa).

Residues Thr19, Asp38, Gln46, Tyr51, Ala91, Phe129, Asp286, and Ser327 each contribute to the FAD site.

Belongs to the ferredoxin--NADP reductase type 2 family. In terms of assembly, homodimer. The cofactor is FAD.

The enzyme catalyses 2 reduced [2Fe-2S]-[ferredoxin] + NADP(+) + H(+) = 2 oxidized [2Fe-2S]-[ferredoxin] + NADPH. This chain is Ferredoxin--NADP reductase, found in Nocardioides sp. (strain ATCC BAA-499 / JS614).